The sequence spans 719 residues: MKLKNQDKHQSFSSNAKVDKISTDSLKNETDIELQNINHEDCLKMSEYENVEPFVSASTIQTGIGIAGKILGTLGVPFAGQVASLYSFILGELWPKGKNQWEIFMEHVEEIINQKISTYARNKALTDLKGLGDALAVYHDSLESWVGNRNNTRARSVVKSQYIALELMFVQKLPSFAVSGEEVPLLPIYAQAANLHLLLLRDASIFGKEWGLSSSEISTFYNRQVERAGDYSDHCVKWYSTGLNNLRGTNAESWVRYNQFRRDMTLMVLDLVALFPSYDTQMYPIKTTAQLTREVYTDAIGTVHPHPSFTSTTWYNNNAPSFSAIEAAVVRNPHLLDFLEQVTIYSLLSRWSNTQYMNMWGGHKLEFRTIGGTLNISTQGSTNTSINPVTLPFTSRDVYRTESLAGLNLFLTQPVNGVPRVDFHWKFVTHPIASDNFYYPGYAGIGTQLQDSENELPPEATGQPNYESYSHRLSHIGLISASHVKALVYSWTHRSADRTNTIEPNSITQIPLVKAFNLSSGAAVVRGPGFTGGDILRRTNTGTFGDIRVNINPPFAQRYRVRIRYASTTDLQFHTSINGKAINQGNFSATMNRGEDLDYKTFRTVGFTTPFSFLDVQSTFTIGAWNFSSGNEVYIDRIEFVPVEVTYEAEYDFEKAQEKVTALFTSTNPRGLKTDVKDYHIDQVSNLVESLSDEFYLDEKRELFEIVKYAKQLHIERNM.

It belongs to the delta endotoxin family.

Functionally, promotes colloidosmotic lysis by binding to the midgut epithelial cells of certain coleopteran and lepidopteran species. Active on Plutella xylostella and Bombyx mori. In Bacillus thuringiensis subsp. kurstaki, this protein is Pesticidal crystal protein Cry1Ia (cry1Ia).